The chain runs to 478 residues: Cell division protein FtsZ homolog 2-1, chloroplastic (478 aa).

Positions 86–112 are disordered; sequence EGTSTIVNPRKETSSGPVVEDFEEPSA. 128–132 serves as a coordination point for GTP; it reads GGGSN. Phosphoserine; by PGK1 is present on Ser-143. GTP-binding positions include 217–219, Glu-248, and Arg-252; that span reads GTG. Thr-286 carries the phosphothreonine; by PGK1 modification. Asp-296 contacts GTP.

This sequence belongs to the FtsZ family. In terms of assembly, aggregates to form a contractile ring-like structure; contraction of the ring was accompanied by an increase in the filament turnover rate. Self-interacts and binds to FTSZ1 in heteromers to form two morphologically distinct types of filaments, termed type-I (smooth filaments) and -II (rough filaments), in a GTP-dependent manner; the GDP-induced disassembly is inhibited by ARC6. Interacts (via C-terminus) with ARC6; this interaction enables ARC3 binding to FTSZ2. Part of a complex made of ARC3, ARC6, FTSZ1 and FTSZ2. Binds to MCD1 in an ARC6-dependent manner. Binds to CDP1/PARC6. Part of a complex made of CDP1/PARC6, ARC3 and FtsZ proteins in the middle of the plastid; this complex enhances the dynamics of Z rings during chloroplast division. Binds to PGK1. Post-translationally, filaments containing FTSZ2-1 are stabilized when in complex with GTP but destabilized after conversion of GTP into GDP; ARC6 conteracts this destabilisation by preventing the dissociation of GDP-bound FTSZ2 molecules thus inhibiting filament disassembly whereas ARC3 promotes GTPase activity thus accelerating the conversion of GTP into GDP and triggering FtsZ2 filaments disassembly. Phosphorylation at Ser-143 is necessary for interactions with ARC3, ARC6, FTSZ1 and FTSZ2-2. Phosphorylations at Ser-143 and Thr-286 are required for the formation of contractile ring at the chloroplast midpoint.

The protein resides in the plastid. It is found in the chloroplast stroma. Its subcellular location is the chloroplast thylakoid membrane. GTPase activity is enhanced by ARC3. Its function is as follows. Exhibits GTPase activity which converts GTP ligands to GDP. Component of the plastid division machinery consisting in a binary fission accomplished by the simultaneous constriction of the FtsZ ring on the stromal side of the inner envelope membrane, and the ARC5 ring on the cytosolic side of the outer envelope membrane. Required for plastid division in a dose-dependent manner. In the vegetative shoot apex, at the shoot apical meristem (SAM), where the proplastid-to-chloroplast transition takes place, major contributor of plastid division in the L1 and L3 layers and contributes equally with FTSZ1 in the L2 layer. This Arabidopsis thaliana (Mouse-ear cress) protein is Cell division protein FtsZ homolog 2-1, chloroplastic.